A 301-amino-acid polypeptide reads, in one-letter code: Acetylglutamate kinase (301 aa).

Substrate contacts are provided by residues 72 to 73 (GG), arginine 94, and asparagine 199.

Belongs to the acetylglutamate kinase family. ArgB subfamily.

The protein resides in the cytoplasm. The enzyme catalyses N-acetyl-L-glutamate + ATP = N-acetyl-L-glutamyl 5-phosphate + ADP. It participates in amino-acid biosynthesis; L-arginine biosynthesis; N(2)-acetyl-L-ornithine from L-glutamate: step 2/4. Functionally, catalyzes the ATP-dependent phosphorylation of N-acetyl-L-glutamate. This is Acetylglutamate kinase from Bartonella tribocorum (strain CIP 105476 / IBS 506).